Reading from the N-terminus, the 346-residue chain is Protein RecA (346 aa).

Position 79-86 (79-86) interacts with ATP; that stretch reads GPESSGKT.

It belongs to the RecA family.

Its subcellular location is the cytoplasm. Functionally, can catalyze the hydrolysis of ATP in the presence of single-stranded DNA, the ATP-dependent uptake of single-stranded DNA by duplex DNA, and the ATP-dependent hybridization of homologous single-stranded DNAs. It interacts with LexA causing its activation and leading to its autocatalytic cleavage. The sequence is that of Protein RecA from Chlorobaculum tepidum (strain ATCC 49652 / DSM 12025 / NBRC 103806 / TLS) (Chlorobium tepidum).